The following is a 168-amino-acid chain: GTP-dependent dephospho-CoA kinase (168 aa).

GTP contacts are provided by Asp-49, Ile-50, Val-51, Asp-68, Lys-70, and Glu-120.

Belongs to the GTP-dependent DPCK family.

The catalysed reaction is 3'-dephospho-CoA + GTP = GDP + CoA + H(+). It participates in cofactor biosynthesis; coenzyme A biosynthesis. Functionally, catalyzes the GTP-dependent phosphorylation of the 3'-hydroxyl group of dephosphocoenzyme A to form coenzyme A (CoA). In Pyrobaculum islandicum (strain DSM 4184 / JCM 9189 / GEO3), this protein is GTP-dependent dephospho-CoA kinase.